A 62-amino-acid polypeptide reads, in one-letter code: Large ribosomal subunit protein bL28 (62 aa).

It belongs to the bacterial ribosomal protein bL28 family.

The polypeptide is Large ribosomal subunit protein bL28 (Parafrankia sp. (strain EAN1pec)).